The sequence spans 299 residues: Putative activator of 90 kDa heat shock protein ATPase homolog 2 (299 aa).

The protein belongs to the AHA1 family.

In terms of biological role, co-chaperone that stimulates HSP90 ATPase activity. This Homo sapiens (Human) protein is Putative activator of 90 kDa heat shock protein ATPase homolog 2.